The chain runs to 281 residues: Plasmanylethanolamine desaturase (281 aa).

The Cytoplasmic segment spans residues 1 to 28; that stretch reads MKTQEIEKKVRQQDAQVLAQGYSPAIRA. A helical transmembrane segment spans residues 29–45; it reads MEIAAIVSFVSLEVALV. Topologically, residues 46-58 are periplasmic; it reads YRLWGTPYAGTWL. The chain crosses the membrane as a helical span at residues 59–75; sequence LLSAVLLGYLAADFVSG. The Cytoplasmic segment spans residues 76-123; it reads FVHWMGDTWGSTEMPVLGKALIRPFREHHVDEKAITRHDFVETNGNNC. The chain crosses the membrane as a helical span at residues 124-138; it reads LISLPVAIIALCLPM. Residues 139–142 lie on the Periplasmic side of the membrane; that stretch reads SGPG. Residues 143-159 form a helical membrane-spanning segment; it reads WVFCASFLGAMIFWVMA. Residues 160–281 are Cytoplasmic-facing; the sequence is TNQFHKWSHM…VQEKPASTRP (122 aa). A Histidine box-1 motif is present at residues 164–168; the sequence is HKWSH. Positions 191 to 195 match the Histidine box-2 motif; sequence HRIHH.

The protein belongs to the fatty acid desaturase CarF family. Interacts with CarR.

The protein localises to the cell inner membrane. It carries out the reaction a 1-(1,2-saturated alkyl)-2-acyl-sn-glycero-3-phosphoethanolamine + 2 Fe(II)-[cytochrome b5] + O2 + 2 H(+) = a 1-O-(1Z-alkenyl)-2-acyl-sn-glycero-3-phosphoethanolamine + 2 Fe(III)-[cytochrome b5] + 2 H2O. The catalysed reaction is 1-O-(13-methyltetradecyl)-2-(13-methyltetradecanoyl)-sn-glycero-3-phosphoethanolamine + 2 Fe(II)-[cytochrome b5] + O2 + 2 H(+) = 1-O-(1Z-13-methyltetradecenyl)-2-(13-methyltetradecanoyl)-sn-glycero-3-phosphoethanolamine + 2 Fe(III)-[cytochrome b5] + 2 H2O. Functionally, plasmanylethanolamine desaturase involved in plasmalogen biogenesis in the membrane, required for light-induced carotenogenesis. Plasmalogens are glycerophospholipids with a hydrocarbon chain linked by a vinyl ether bond at the glycerol sn-1 position, and are involved in antioxidative and signaling mechanisms, most precisely in sensing photooxidative stress through singlet oxygen. Participates in the light-dependent inactivation of the antisigma factor CarR. Mediates signaling by singlet oxygen, generated via photoexcited protoporphyrin IX. This chain is Plasmanylethanolamine desaturase, found in Myxococcus xanthus.